A 332-amino-acid chain; its full sequence is UDP-galactose/UDP-glucose transporter 1 (332 aa).

The next 8 membrane-spanning stretches (helical) occupy residues 11–31 (ILLL…QGVL), 49–69 (HLAF…YIMI), 80–100 (APWW…AMGI), 112–132 (VLAK…VYGI), 135–155 (TFPE…FALL), 206–226 (IMLG…FGLP), 252–272 (ICGA…GSLA), and 301–317 (WGCV…QIYL). Residues 327–332 (KKKQKS) carry the Di-lysine motif motif.

It belongs to the nucleotide-sugar transporter family. UDP-galactose:UMP antiporter (TC 2.A.7.11) subfamily.

It is found in the endoplasmic reticulum membrane. In terms of biological role, essential sugar transporter required for the transport of UDP-galactose and UDP-glucose from the cytoplasm into the Golgi and the endoplasmic reticulum, to ensure quality control of protein folding. Essential for pollen development and involved in embryo sac progress. This Arabidopsis thaliana (Mouse-ear cress) protein is UDP-galactose/UDP-glucose transporter 1.